A 512-amino-acid chain; its full sequence is Dihydroniloticin synthase CYP71CD1 (512 aa).

The chain crosses the membrane as a helical span at residues tyrosine 7–tryptophan 27. Residue cysteine 451 participates in heme binding.

Belongs to the cytochrome P450 family. Heme is required as a cofactor. Accumulates in mature fruits and in juice vesicles.

Its subcellular location is the membrane. It carries out the reaction tirucalla-7,24-dien-3beta-ol + 2 reduced [NADPH--hemoprotein reductase] + 2 O2 = dihydroniloticin + 2 oxidized [NADPH--hemoprotein reductase] + 2 H2O + 2 H(+). It functions in the pathway secondary metabolite biosynthesis; terpenoid biosynthesis. Monooxygenase involved in the biosynthesis of limonoids triterpene natural products such as limonin, a compound with insecticidal activity responsible for the bitter taste in citrus. Catalyzes the conversion of tirucalladienol to dihydroniloticin. In Citrus sinensis (Sweet orange), this protein is Dihydroniloticin synthase CYP71CD1.